Here is a 288-residue protein sequence, read N- to C-terminus: Homoserine kinase (288 aa).

78–88 (PLARGLGSSSS) serves as a coordination point for ATP.

This sequence belongs to the GHMP kinase family. Homoserine kinase subfamily.

It localises to the cytoplasm. It carries out the reaction L-homoserine + ATP = O-phospho-L-homoserine + ADP + H(+). The protein operates within amino-acid biosynthesis; L-threonine biosynthesis; L-threonine from L-aspartate: step 4/5. In terms of biological role, catalyzes the ATP-dependent phosphorylation of L-homoserine to L-homoserine phosphate. The sequence is that of Homoserine kinase from Streptococcus mutans serotype c (strain ATCC 700610 / UA159).